A 695-amino-acid polypeptide reads, in one-letter code: Potassium voltage-gated channel subfamily KQT member 4 (695 aa).

The interval 1–21 is disordered; sequence MAEAPPRRLGLGPPPGDAPRA. At 1 to 96 the chain is on the cytoplasmic side; it reads MAEAPPRRLG…VYNVLERPRG (96 aa). Arg-93 lines the a 1,2-diacyl-sn-glycero-3-phospho-(1D-myo-inositol-4,5-bisphosphate) pocket. The chain crosses the membrane as a helical span at residues 97–118; sequence WAFVYHVFIFLLVFSCLVLSVL. Over 119–129 the chain is Extracellular; the sequence is STIQEHQELAN. The chain crosses the membrane as a helical span at residues 130–152; it reads ECLLILEFVMIVVFGLEYIVRVW. At 153 to 168 the chain is on the cytoplasmic side; it reads SAGCCCRYRGWQGRFR. The helical transmembrane segment at 169–191 threads the bilayer; the sequence is FARKPFCVIDFIVFVASVAVIAA. Lys-172 provides a ligand contact to a 1,2-diacyl-sn-glycero-3-phospho-(1D-myo-inositol-4,5-bisphosphate). Residues 192-202 lie on the Extracellular side of the membrane; the sequence is GTQGNIFATSA. Residues 203–223 traverse the membrane as a helical; Voltage-sensor segment; it reads LRSMRFLQILRMVRMDRRGGT. A 1,2-diacyl-sn-glycero-3-phospho-(1D-myo-inositol-4,5-bisphosphate)-binding residues include Arg-219, Arg-220, Lys-225, and Ser-235. At 224–235 the chain is on the cytoplasmic side; that stretch reads WKLLGSVVYAHS. The chain crosses the membrane as a helical span at residues 236 to 258; the sequence is KELITAWYIGFLVLIFASFLVYL. Topologically, residues 259–270 are extracellular; sequence AEKDANSDFSSY. Positions 271 to 292 form an intramembrane region, pore-forming; that stretch reads ADSLWWGTITLTTIGYGDKTPH. Thr-293 is a topological domain (extracellular). A helical membrane pass occupies residues 294–322; that stretch reads WLGRVLAAGFALLGISFFALPAGILGSGF. Over 323 to 695 the chain is Cytoplasmic; it reads ALKVQEQHRQ…ISRSVSTNMD (373 aa). A 1,2-diacyl-sn-glycero-3-phospho-(1D-myo-inositol-4,5-bisphosphate)-binding residues include His-330 and Lys-333. The tract at residues 342–351 is interaction with CALM; it reads AANLIQAAWR. Disordered stretches follow at residues 400 to 480 and 496 to 515; these read RRAP…TKVQ and RLKPRTSAEDAPSEEVAEEK. Composition is skewed to polar residues over residues 443-452 and 463-480; these read GSSQRRTGPS and TSPSSEQVGEATSPTKVQ. Residues 535-549 form an interaction with CALM region; it reads RSIRILKFLVAKRKF. The tract at residues 546–650 is C-terminal assembly domain (tetramerization); sequence KRKFKETLRP…SRCLRSGTSA (105 aa). Positions 587-606 are disordered; that stretch reads VGRGPGDRKAREKGDKGPSD. The segment covering 591 to 605 has biased composition (basic and acidic residues); sequence PGDRKAREKGDKGPS. A coiled-coil region spans residues 615 to 636; sequence MMGRVVKVEKQVQSIEHKLDLL.

This sequence belongs to the potassium channel family. KQT (TC 1.A.1.15) subfamily. Kv7.4/KCNQ4 sub-subfamily. Homotetramer. Interacts (via C-terminus) with calmodulin; forms a heterooctameric structure (with 4:4 KCNQ1:CALM stoichiometry); the interaction is calcium-independent, constitutive, participates in the proper assembly of a functional channel. The interaction with calcium-free CALM controls channel trafficking whereas interaction with calcium-bound CALM regulates channel gating. May form a functional heteromultimeric channel with KCNQ3. Interacts with HSP90AB1; promotes cell surface expression of KCNQ4. Expressed in the outer, but not the inner, sensory hair cells of the cochlea. Slightly expressed in heart, brain and skeletal muscle.

It is found in the basal cell membrane. The catalysed reaction is K(+)(in) = K(+)(out). Its activity is regulated as follows. Two molecules of phosphatidylinositol-4,5-bisphosphate (PIP2-I and PIP2-II) are essential to activate KCNQ4 channel by inducing the coupling of the voltage-sensing domain (VSD) and the pore-forming domain (PD). Upon channel activation, PIP2-I and PIP2-II disrupt the VSD-calmodulin/CALM interaction, causing the release of CALM from the VSD which triggers the opening of the gate. Calcium suppresses KCNQ4 channel current through calcium-bound CALM C-terminus. Therefore CALM acts as calcium sensor that controls channel activity. ML213 potentiates KCNQ4 channel. KCNQ4 channel is blocked by linopirdin, XE991 and bepridil, whereas clofilium is without significant effect. Muscarinic agonist oxotremorine-M strongly suppress KCNQ4 current in CHO cells in which cloned KCNQ4 channels were coexpressed with M1 muscarinic receptors. In terms of biological role, pore-forming subunit of the voltage-gated potassium (Kv) channel involved in the regulation of sensory cells excitability in the cochlea. KCNQ4/Kv7.4 channel is composed of 4 pore-forming subunits assembled as tetramers. Promotes the outflow of potassium ions in the repolarization phase of action potential which plays a role in regulating membrane potential of excitable cells. The channel conducts a slowly activating and deactivating current. Current often shows some inward rectification at positive potentials. Channel may be selectively permeable in vitro to other cations besides potassium, in decreasing order of affinity K(+) = Rb(+) &gt; Cs(+) &gt; Na(+). Important for normal physiological function of inner ear such as sensory perception of sound. The protein is Potassium voltage-gated channel subfamily KQT member 4 of Homo sapiens (Human).